The chain runs to 98 residues: Acylphosphatase (98 aa).

One can recognise an Acylphosphatase-like domain in the interval 12 to 98 (TYYVRVRGVV…EKRFERFQQQ (87 aa)). Residues R27 and N45 contribute to the active site.

This sequence belongs to the acylphosphatase family.

It carries out the reaction an acyl phosphate + H2O = a carboxylate + phosphate + H(+). This chain is Acylphosphatase (acyP), found in Burkholderia cenocepacia (strain HI2424).